A 344-amino-acid chain; its full sequence is GTPase Obg (344 aa).

The segment covering 1-12 (MFVDSASFSVSS) has biased composition (polar residues). Positions 1-36 (MFVDSASFSVSSGKGGPGCASFRREKHVPLGGPDGG) are disordered. In terms of domain architecture, Obg spans 1–158 (MFVDSASFSV…RNIRLELKLI (158 aa)). One can recognise an OBG-type G domain in the interval 159–341 (ADVGLVGFPN…LKFGLLEILK (183 aa)). GTP is bound by residues 165–172 (GFPNVGKS), 190–194 (FTTLT), 212–215 (DIPG), 280–283 (TRLD), and 322–324 (SSV). 2 residues coordinate Mg(2+): Ser-172 and Thr-192.

It belongs to the TRAFAC class OBG-HflX-like GTPase superfamily. OBG GTPase family. As to quaternary structure, monomer. Mg(2+) serves as cofactor.

It is found in the cytoplasm. Functionally, an essential GTPase which binds GTP, GDP and possibly (p)ppGpp with moderate affinity, with high nucleotide exchange rates and a fairly low GTP hydrolysis rate. Plays a role in control of the cell cycle, stress response, ribosome biogenesis and in those bacteria that undergo differentiation, in morphogenesis control. The protein is GTPase Obg of Campylobacter fetus subsp. fetus (strain 82-40).